The primary structure comprises 312 residues: Olfactory receptor 6C74 (312 aa).

The Extracellular segment spans residues 1–23 (MRNHTTVANFILLGLTDDPQLQV). An N-linked (GlcNAc...) asparagine glycan is attached at asparagine 3. A helical transmembrane segment spans residues 24–44 (IIFLLLFFTYMLSITGNLTII). The Cytoplasmic portion of the chain corresponds to 45 to 63 (TLTLLDLHLKTPMYFFLRN). Residues 64 to 84 (FSFLEVSFTTVYIPKFLVSMA) traverse the membrane as a helical segment. At 85 to 95 (TGDKTISYNDC) the chain is on the extracellular side. Cysteine 95 and cysteine 177 are oxidised to a cystine. The helical transmembrane segment at 96-116 (AAQLFFTILLGATEFFLLAAM) threads the bilayer. Over 117 to 140 (SYERYVAICKPLHYTTIMSSRVCS) the chain is Cytoplasmic. The helical transmembrane segment at 141–161 (LLVFASWMAGFLIIFPPLLMG) threads the bilayer. Residues 162 to 194 (LQLDFCAANTVDHFFCDVSPILQLSCTDTDIIE) lie on the Extracellular side of the membrane. A helical transmembrane segment spans residues 195–215 (LMMLLSAILTLLVTLVLVILS). The Cytoplasmic segment spans residues 216 to 237 (YTNIIRTILKIPSSQQRKKAFS). The helical transmembrane segment at 238-258 (TCSSHMVVVSISYGSCIFMYV) threads the bilayer. At 259–269 (KPSAKERVSLN) the chain is on the extracellular side. A helical membrane pass occupies residues 270–290 (KGIALLSTSVAPMLNPFIYTL). Topologically, residues 291–312 (RNKQVKDVFKHTVKKIELFSMK) are cytoplasmic.

Belongs to the G-protein coupled receptor 1 family.

The protein localises to the cell membrane. Its function is as follows. Odorant receptor. The sequence is that of Olfactory receptor 6C74 (OR6C74) from Homo sapiens (Human).